Consider the following 857-residue polypeptide: KH domain-containing protein HEN4 (857 aa).

Residues 1–15 (MERNSVKFHAEKRSG) show a composition bias toward basic and acidic residues. Residues 1 to 27 (MERNSVKFHAEKRSGAFDPGSGFGSSK) are disordered. 4 KH domains span residues 46–110 (HAAF…KLGA), 149–217 (TVVC…LVSI), 451–521 (DVVF…IMLI), and 541–610 (SITA…IFHI). Residues 644–755 (SDNPLSIGSH…RGLSDASGGL (112 aa)) are disordered. Polar residues-rich tracts occupy residues 645 to 665 (DNPL…NSSS) and 673 to 688 (SFLS…SRSV). Residues 718–730 (FTMDHSDNSHHLT) are compositionally biased toward basic and acidic residues. The span at 746–755 (RGLSDASGGL) shows a compositional bias: low complexity. Residues 775–839 (NTTVEIRVPA…DQTQAAQNLL (65 aa)) enclose the KH 5 domain.

In terms of assembly, interacts with HUA1. Interacts with FLK and PEP.

It localises to the nucleus speckle. Functionally, functions in floral reproductive organ identity in the third whorl and floral determinacy specification by specifically promoting the processing of AGAMOUS (AG) pre-mRNA. Functions in association with HUA1 and HUA2. This Arabidopsis thaliana (Mouse-ear cress) protein is KH domain-containing protein HEN4.